The sequence spans 318 residues: MPKRGKKGAVVEDAEEPKTEPEAKKSKAGAKKNEKEAVGEGAVLYEDPPDQKTSPSGKSATLKICSWNVDGLRAWIKKKGLDWVKEEAPDILCLQETKCSENKLPVELQELSGLSHQYWSAPSDKEGYSGVGLLSRQCPLKVSYGIGEEEHDQEGRVIVAEYDAFVLVTAYVPNAGRGLVRLEYRQRWDEAFRKFLKGLASRKPLVLCGDLNVAHEEIDLRNPKGNKKNAGFTPQERQGFGELLQAVPLTDSFRHLYPNTAYAYTFWTYMMNARSKNVGWRLDYFLLSQSVLPALCDSKIRSKALGSDHCPITLYLAL.

The tract at residues 1–59 (MPKRGKKGAVVEDAEEPKTEPEAKKSKAGAKKNEKEAVGEGAVLYEDPPDQKTSPSGKS) is disordered. The segment at 2–33 (PKRGKKGAVVEDAEEPKTEPEAKKSKAGAKKN) is necessary for interaction with YBX1, binding to RNA, association together with NPM1 to rRNA, endoribonuclease activity on abasic RNA and localization in the nucleoli. 2 positions are modified to N6-acetyllysine; by EP300: Lys-6 and Lys-7. Residues 8-13 (GAVVED) carry the Nuclear localization signal (NLS) motif. The segment covering 16-38 (EPKTEPEAKKSKAGAKKNEKEAV) has biased composition (basic and acidic residues). The tract at residues 23 to 33 (AKKSKAGAKKN) is necessary for interaction with NPM1 and for efficient rRNA binding. Lys-27, Lys-31, Lys-32, and Lys-35 each carry N6-acetyllysine. The residue at position 54 (Ser-54) is a Phosphoserine. The Nuclear export signal (NES) signature appears at 64 to 80 (ICSWNVDGLRAWIKKKG). The residue at position 65 (Cys-65) is an S-nitrosocysteine; alternate. Cys-65 and Cys-93 are oxidised to a cystine. Asp-70 lines the Mg(2+) pocket. The residue at position 93 (Cys-93) is an S-nitrosocysteine; alternate. Residue Glu-96 coordinates Mg(2+). Tyr-171 is a catalytic residue. N6-acetyllysine is present on Lys-197. Mg(2+) is bound by residues Asp-210 and Asn-212. Asp-210 (proton donor/acceptor) is an active-site residue. Thr-233 carries the phosphothreonine; by CDK5 modification. A mitochondrial targeting sequence (MTS) region spans residues 289–318 (QSVLPALCDSKIRSKALGSDHCPITLYLAL). Mg(2+) is bound at residue Asp-308. S-nitrosocysteine is present on Cys-310.

Belongs to the DNA repair enzymes AP/ExoA family. As to quaternary structure, monomer. Homodimer; disulfide-linked. Component of the SET complex, composed of at least APEX1, SET, ANP32A, HMGB2, NME1 and TREX1. Associates with the dimer XRCC5/XRCC6 in a DNA-dependent manner. Interacts with SIRT1; the interaction is increased in the context of genotoxic stress. Interacts with HDAC1, HDAC2 and HDAC3; the interactions are not dependent on the APEX1 acetylation status. Interacts with XRCC1; the interaction is induced by SIRT1 and increased with the APEX1 acetylated form. Interacts with NPM1 (via N-terminal domain); the interaction is RNA-dependent and decreases in hydrogen peroxide-damaged cells. Interacts (via N-terminus) with YBX1 (via C-terminus); the interaction is increased in presence of APEX1 acetylated at Lys-6 and Lys-7. Interacts with HNRNPL; the interaction is DNA-dependent. Interacts (via N-terminus) with KPNA1 and KPNA2. Interacts with TXN; the interaction stimulates the FOS/JUN AP-1 complex DNA-binding activity in a redox-dependent manner. Interacts with GZMA, KRT8, MDM2, POLB, PRDX6, PRPF19, RPLP0, TOMM20 and WDR77. Binds to CDK5. Mg(2+) is required as a cofactor. Mn(2+) serves as cofactor. In terms of processing, phosphorylated. Phosphorylation by kinase PKC or casein kinase CK2 results in enhanced redox activity that stimulates binding of the FOS/JUN AP-1 complex to its cognate binding site. AP-endodeoxyribonuclease activity is not affected by CK2-mediated phosphorylation. Phosphorylation of Thr-233 by CDK5 in response to MPP(+)/MPTP (1-methyl-4-phenylpyridinium) reduces AP-endodeoxyribonuclease activity resulting in accumulation of DNA damage and contributing to neuronal death. Post-translationally, acetylated on Lys-6 and Lys-7. Acetylation is increased by the transcriptional coactivator EP300 acetyltransferase, genotoxic agents like H(2)O(2) and methyl methanesulfonate (MMS). Acetylation increases its binding affinity to the negative calcium response element (nCaRE) DNA promoter. The acetylated form induces a stronger binding of YBX1 to the Y-box sequence in the MDR1 promoter than the unacetylated form. Deacetylated on lysines. Lys-6 and Lys-7 are deacetylated by SIRT1. Cleaved at Lys-31 by granzyme A to create the mitochondrial form; leading in reduction of binding to DNA, AP endodeoxyribonuclease activity, redox activation of transcription factors and to enhanced cell death. Cleaved by granzyme K; leading to intracellular ROS accumulation and enhanced cell death after oxidative stress. In terms of processing, cys-69 and Cys-93 are nitrosylated in response to nitric oxide (NO) and lead to the exposure of the nuclear export signal (NES). Post-translationally, ubiquitinated by MDM2; leading to translocation to the cytoplasm and proteasomal degradation. In terms of tissue distribution, the mitochondrial form is expressed in liver (at protein level). Thymus.

It is found in the nucleus. Its subcellular location is the nucleolus. The protein localises to the nucleus speckle. It localises to the endoplasmic reticulum. The protein resides in the cytoplasm. It is found in the mitochondrion. It catalyses the reaction Exonucleolytic cleavage in the 3'- to 5'-direction to yield nucleoside 5'-phosphates.. Its activity is regulated as follows. NPM1 stimulates endodeoxyribonuclease activity on double-stranded DNA with AP sites, but inhibits endoribonuclease activity on single-stranded RNA containing AP sites. Functionally, multifunctional protein that plays a central role in the cellular response to oxidative stress. The two major activities of APEX1 are DNA repair and redox regulation of transcriptional factors. Functions as an apurinic/apyrimidinic (AP) endodeoxyribonuclease in the DNA base excision repair (BER) pathway of DNA lesions induced by oxidative and alkylating agents. Initiates repair of AP sites in DNA by catalyzing hydrolytic incision of the phosphodiester backbone immediately adjacent to the damage, generating a single-strand break with 5'-deoxyribose phosphate and 3'-hydroxyl ends. Also incises at AP sites in the DNA strand of DNA/RNA hybrids, single-stranded DNA regions of R-loop structures, and single-stranded RNA molecules. Has 3'-5' exoribonuclease activity on mismatched deoxyribonucleotides at the 3' termini of nicked or gapped DNA molecules during short-patch BER. Possesses DNA 3' phosphodiesterase activity capable of removing lesions (such as phosphoglycolate) blocking the 3' side of DNA strand breaks. May also play a role in the epigenetic regulation of gene expression by participating in DNA demethylation. Acts as a loading factor for POLB onto non-incised AP sites in DNA and stimulates the 5'-terminal deoxyribose 5'-phosphate (dRp) excision activity of POLB. Plays a role in the protection from granzyme-mediated cellular repair leading to cell death. Also involved in the DNA cleavage step of class switch recombination (CSR). On the other hand, APEX1 also exerts reversible nuclear redox activity to regulate DNA binding affinity and transcriptional activity of transcriptional factors by controlling the redox status of their DNA-binding domain, such as the FOS/JUN AP-1 complex after exposure to IR. Involved in calcium-dependent down-regulation of parathyroid hormone (PTH) expression by binding to negative calcium response elements (nCaREs). Together with HNRNPL or the dimer XRCC5/XRCC6, associates with nCaRE, acting as an activator of transcriptional repression. Stimulates the YBX1-mediated MDR1 promoter activity, when acetylated at Lys-6 and Lys-7, leading to drug resistance. Also acts as an endoribonuclease involved in the control of single-stranded RNA metabolism. Plays a role in regulating MYC mRNA turnover by preferentially cleaving in between UA and CA dinucleotides of the MYC coding region determinant (CRD). In association with NMD1, plays a role in the rRNA quality control process during cell cycle progression. Associates, together with YBX1, on the MDR1 promoter. Together with NPM1, associates with rRNA. Binds DNA and RNA. This Bos taurus (Bovine) protein is DNA repair nuclease/redox regulator APEX1 (APEX1).